Here is a 299-residue protein sequence, read N- to C-terminus: MKTLTLAHHGLGRRAHAFYVLTKPRVNALIVFCAVIGMFLAVPDGLPDPLRVFAATVGIACVAGAAAAMNCLIEQQLDARMARTRNRPLPRGELHSVEVLVFAGVLGGFGLSVLYQAVNALTMWLTLATFVGYAVIYTLLLKPRTPQNIVIGGASGAMPPVLGWAAVSGEVTAEALLLFLIIFAWTPPHFWSLALYRTADYARAGLPMLPVTHGAAYTRLSVLLYTCALFGVTLLPFAIRMSGWIYLVAAVTLGLRFVHYAWRLLRDYSDALARRTFRFSIVYLSLLFAALLADHYLRL.

9 consecutive transmembrane segments (helical) span residues 26–46 (VNAL…PDGL), 53–73 (FAAT…NCLI), 94–114 (LHSV…LSVL), 121–141 (LTMW…TLLL), 149–169 (IVIG…AVSG), 175–195 (ALLL…SLAL), 217–239 (YTRL…PFAI), 243–265 (GWIY…WRLL), and 277–297 (FRFS…DHYL).

Belongs to the UbiA prenyltransferase family. Protoheme IX farnesyltransferase subfamily.

It is found in the cell inner membrane. It carries out the reaction heme b + (2E,6E)-farnesyl diphosphate + H2O = Fe(II)-heme o + diphosphate. It participates in porphyrin-containing compound metabolism; heme O biosynthesis; heme O from protoheme: step 1/1. Its function is as follows. Converts heme B (protoheme IX) to heme O by substitution of the vinyl group on carbon 2 of heme B porphyrin ring with a hydroxyethyl farnesyl side group. This chain is Protoheme IX farnesyltransferase, found in Azoarcus sp. (strain BH72).